We begin with the raw amino-acid sequence, 221 residues long: LHFPL tetraspan subfamily member 5 protein (221 aa).

Residues 1 to 24 are Cytoplasmic-facing; it reads MPKLLPAQEAARIYHTNYVRNARA. The chain crosses the membrane as a helical span at residues 25-45; that stretch reads MGVLWALFTLCFSILMVVTFI. The Extracellular segment spans residues 46-98; that stretch reads QPYWIGDSIDTPQAGYFGLFSYCIGNALTGELICKGSPLDFGTIPSSAFKTAM. Residues 99–119 form a helical membrane-spanning segment; sequence FFVGISTFLIIGSILCFSLFF. At 120–128 the chain is on the cytoplasmic side; it reads FCNAATVYK. Residues 129–149 traverse the membrane as a helical segment; that stretch reads VCAWMQLAAATGLMIGCLIYP. The Extracellular segment spans residues 150-179; that stretch reads DGWDSSEVKRMCGDKTDKYTLGACTVRWAY. Residues 180 to 200 traverse the membrane as a helical segment; that stretch reads ILCIIGILDALILSFLAFVLG. Residues 201 to 221 lie on the Cytoplasmic side of the membrane; sequence NRQDNLLPSDFKVESKEEGNE.

The protein belongs to the LHFP family.

It localises to the cell membrane. Its function is as follows. Probable component of the mechanotransducer (MET) non-specific cation channel complex. The sequence is that of LHFPL tetraspan subfamily member 5 protein from Gallus gallus (Chicken).